The primary structure comprises 1094 residues: Probable arabinosyltransferase C (1094 aa).

13 helical membrane-spanning segments follow: residues 28–50 (IARY…TPLL), 232–251 (AAMI…LHIL), 264–286 (PARW…WWHF), 341–360 (SIWM…WVIS), 373–392 (TSRA…WLPL), 431–453 (IGAL…LVAI), 466–488 (RFGV…IPIF), 530–552 (SIAR…AMSL), 565–582 (SRRI…MMFT), 586–608 (WTHH…AVAV), 620–642 (TVFA…GWWY), 657–679 (WRWS…AAWF), and 700–722 (LAGI…EVVS). A compositionally biased stretch (low complexity) spans 817–831 (GSEPGTEGGTTAAPG). The segment at 817-836 (GSEPGTEGGTTAAPGINGSR) is disordered.

The protein belongs to the emb family.

It localises to the cell membrane. Arabinosyl transferase responsible for the polymerization of arabinose into the arabinan of arabinogalactan. This chain is Probable arabinosyltransferase C (embC), found in Mycobacterium tuberculosis (strain ATCC 25618 / H37Rv).